The following is a 327-amino-acid chain: D-alanine--D-alanine ligase (327 aa).

The ATP-grasp domain maps to 113 to 312; it reads KRLWMTHDLS…YEDFVMQVVA (200 aa). 139–194 contacts ATP; the sequence is VADLGLPLIVKPAREGSSIGLSKVTDASQMREAFEKAAALDNDVIAETFIDGAELT. Mg(2+) contacts are provided by aspartate 266, glutamate 279, and asparagine 281.

The protein belongs to the D-alanine--D-alanine ligase family. It depends on Mg(2+) as a cofactor. Requires Mn(2+) as cofactor.

It is found in the cytoplasm. The catalysed reaction is 2 D-alanine + ATP = D-alanyl-D-alanine + ADP + phosphate + H(+). It participates in cell wall biogenesis; peptidoglycan biosynthesis. Its function is as follows. Cell wall formation. The polypeptide is D-alanine--D-alanine ligase (Cupriavidus pinatubonensis (strain JMP 134 / LMG 1197) (Cupriavidus necator (strain JMP 134))).